Reading from the N-terminus, the 378-residue chain is Enoyl-[acyl-carrier-protein] reductase 1, mitochondrial (378 aa).

Residue Y59 is the Proton donor of the active site. Residues N151, 180–183 (NSQV), 203–206 (RDGK), 284–287 (YGGM), 309–311 (YWL), and K372 contribute to the NADP(+) site.

This sequence belongs to the zinc-containing alcohol dehydrogenase family. Quinone oxidoreductase subfamily. Homodimer.

It is found in the mitochondrion matrix. The enzyme catalyses a 2,3-saturated acyl-[ACP] + NADP(+) = a (2E)-enoyl-[ACP] + NADPH + H(+). In terms of biological role, catalyzes the NADPH-dependent reduction of trans-2-enoyl thioesters in mitochondrial fatty acid synthesis (fatty acid synthesis type II). Fatty acid chain elongation in mitochondria uses acyl carrier protein (ACP) as an acyl group carrier, but the enzyme accepts both ACP and CoA thioesters as substrates in vitro. Required for respiration and the maintenance of the mitochondrial compartment. The chain is Enoyl-[acyl-carrier-protein] reductase 1, mitochondrial (ETR1) from Debaryomyces hansenii (strain ATCC 36239 / CBS 767 / BCRC 21394 / JCM 1990 / NBRC 0083 / IGC 2968) (Yeast).